We begin with the raw amino-acid sequence, 154 residues long: 3-dehydroquinate dehydratase (154 aa).

Catalysis depends on tyrosine 26, which acts as the Proton acceptor. 3 residues coordinate substrate: asparagine 77, histidine 83, and aspartate 90. Histidine 103 serves as the catalytic Proton donor. Residues 104–105 and arginine 114 contribute to the substrate site; that span reads IS.

Belongs to the type-II 3-dehydroquinase family. Homododecamer.

It catalyses the reaction 3-dehydroquinate = 3-dehydroshikimate + H2O. The protein operates within metabolic intermediate biosynthesis; chorismate biosynthesis; chorismate from D-erythrose 4-phosphate and phosphoenolpyruvate: step 3/7. Its function is as follows. Catalyzes a trans-dehydration via an enolate intermediate. The sequence is that of 3-dehydroquinate dehydratase from Buchnera aphidicola subsp. Baizongia pistaciae (strain Bp).